The sequence spans 364 residues: Apyrase (364 aa).

The N-terminal stretch at 1 to 35 (MRSSYRVGNPIRFQPTNVVGLLLLSLVLSFMLVQS) is a signal peptide.

It belongs to the apyrase family. Requires Ca(2+) as cofactor. In terms of tissue distribution, salivary gland (at protein level).

It is found in the secreted. It catalyses the reaction a ribonucleoside 5'-triphosphate + 2 H2O = a ribonucleoside 5'-phosphate + 2 phosphate + 2 H(+). In terms of biological role, facilitates hematophagy by inhibiting ADP-dependent platelet aggregation in the host. Cleaves adenosine triphosphate (ATP) and adenosine diphosphate (ADP) to adenosine monophosphate (AMP) and inorganic phosphate in calcium-dependent manner. The sequence is that of Apyrase from Cimex lectularius (Bed bug).